The following is a 421-amino-acid chain: Enolase (421 aa).

Q162 lines the (2R)-2-phosphoglycerate pocket. The Proton donor role is filled by E204. Residues D241, E284, and D311 each coordinate Mg(2+). Residues K336, R365, S366, and K387 each coordinate (2R)-2-phosphoglycerate. K336 functions as the Proton acceptor in the catalytic mechanism.

The protein belongs to the enolase family. The cofactor is Mg(2+).

The protein resides in the cytoplasm. The protein localises to the secreted. Its subcellular location is the cell surface. It carries out the reaction (2R)-2-phosphoglycerate = phosphoenolpyruvate + H2O. It participates in carbohydrate degradation; glycolysis; pyruvate from D-glyceraldehyde 3-phosphate: step 4/5. Its function is as follows. Catalyzes the reversible conversion of 2-phosphoglycerate (2-PG) into phosphoenolpyruvate (PEP). It is essential for the degradation of carbohydrates via glycolysis. The polypeptide is Enolase (Nautilia profundicola (strain ATCC BAA-1463 / DSM 18972 / AmH)).